Here is a 153-residue protein sequence, read N- to C-terminus: Transcriptional repressor NrdR (153 aa).

The segment at 3–34 (CPSCFHNGTRVLDSRPVDEGRSIRRRRECESC) is a zinc-finger region. In terms of domain architecture, ATP-cone spans 49-139 (LIVVKKEGTR…VYRQFKDLNV (91 aa)).

The protein belongs to the NrdR family. Zn(2+) is required as a cofactor.

Negatively regulates transcription of bacterial ribonucleotide reductase nrd genes and operons by binding to NrdR-boxes. This is Transcriptional repressor NrdR from Bacillus cytotoxicus (strain DSM 22905 / CIP 110041 / 391-98 / NVH 391-98).